The sequence spans 228 residues: MKDNLKIMDLPKNERPRERLFRYGSEALSNSELLAVILGTGIKGENIVSLSNRIIKDNGGLNGIFNSDLEDFVSISGVGKAKAAKILAMAELSKRFKSYKDGDDYRICSPQDAAVLVMEEMRGMKQEHLKVILLNTKNMVIGIKNVFIGTLNSSIVHPREIFFYAIKKNSASIILCHNHPSGDPSPSNEDVNVTFRLKKCGELLGIQLVDHLIIGNGIFISLKEKGIL.

The region spanning R106–L228 is the MPN domain. H177, H179, and D190 together coordinate Zn(2+). The JAMM motif motif lies at H177 to D190.

This sequence belongs to the UPF0758 family.

The protein is UPF0758 protein CKR_0778 of Clostridium kluyveri (strain NBRC 12016).